The primary structure comprises 414 residues: Eukaryotic initiation factor 4A-3 (414 aa).

Position 2 is an N-acetylalanine (alanine 2). A Q motif motif is present at residues 41–69 (DSFDAMELQPDLLRGIYAYGFEKPSAIQQ). A Helicase ATP-binding domain is found at 72 to 242 (IIPFCKGLDV…RKFMNKPVRI (171 aa)). 85 to 92 (AQSGTGKT) contacts ATP. Serine 106 carries the post-translational modification Phosphoserine. Threonine 147 carries the post-translational modification Phosphothreonine. Residues 190-193 (DEAD) carry the DEAD box motif. Positions 253 to 414 (GIKQFYVNVD…ELPSNVADLL (162 aa)) constitute a Helicase C-terminal domain.

This sequence belongs to the DEAD box helicase family. eIF4A subfamily. In terms of assembly, eIF4F is a multi-subunit complex, the composition of which varies with external and internal environmental conditions. It is composed of at least EIF4A, EIF4E and EIF4G.

The protein localises to the cytoplasm. It carries out the reaction ATP + H2O = ADP + phosphate + H(+). Its function is as follows. ATP-dependent RNA helicase which is a subunit of the eIF4F complex involved in cap recognition and is required for mRNA binding to ribosome. In the current model of translation initiation, eIF4A unwinds RNA secondary structures in the 5'-UTR of mRNAs which is necessary to allow efficient binding of the small ribosomal subunit, and subsequent scanning for the initiator codon. This chain is Eukaryotic initiation factor 4A-3 (TIF4A-3), found in Arabidopsis thaliana (Mouse-ear cress).